Reading from the N-terminus, the 226-residue chain is Probable functional amyloid protease FapD (226 aa).

An N-terminal signal peptide occupies residues 1–18; it reads MRRATLCLLLLLAGPSWA. A Peptidase C39 domain is found at 50 to 180; the sequence is QKTDFSCGAA…AGWNGIVFAV (131 aa). C56 is an active-site residue.

It belongs to the FapD family.

It is found in the periplasm. Functionally, probable cysteine protease that is involved in processing fibril precursors. Upon overexpression of the endogenous six-gene locus (fapA-fapF) in situ, cells form large clumps during liquid growth, make large amounts of biofilm and produce amyloid fibrils. Expression of the 6 gene operon in E.coli strain BL21(DE3) induces flocculation and biofilm formation with copious extracellular fibrils. The sequence is that of Probable functional amyloid protease FapD from Pseudomonas fluorescens.